The sequence spans 178 residues: MTTDDLKRLVRTVPDFPSPGILFRDITTLIAHGEGLSACIDHLAHKARAAGAQAVAGMEARGFIFGAAVAARMGLGFIPVRKPGKLPVKTIGIDYALEYGRDRLEIDPTAIREGQRVVIVDDLIATGGTALAAAELLRMAGAHVTHALFVIDLPELHGAERLRGAGLTVEALMDFPGH.

This sequence belongs to the purine/pyrimidine phosphoribosyltransferase family. Homodimer.

Its subcellular location is the cytoplasm. The catalysed reaction is AMP + diphosphate = 5-phospho-alpha-D-ribose 1-diphosphate + adenine. It functions in the pathway purine metabolism; AMP biosynthesis via salvage pathway; AMP from adenine: step 1/1. Its function is as follows. Catalyzes a salvage reaction resulting in the formation of AMP, that is energically less costly than de novo synthesis. This Novosphingobium aromaticivorans (strain ATCC 700278 / DSM 12444 / CCUG 56034 / CIP 105152 / NBRC 16084 / F199) protein is Adenine phosphoribosyltransferase.